The chain runs to 246 residues: MNNNTTAPTYTLRGLQLIGWRDMQHALDYLFADGQLKQGTLVAINAEKILTIEDNAEVRELINAAEFKYADGISVVRSVRKKYPQAQVSRVAGADLWEELMARAGKEGTPVFLVGGKPEVLAQTEAKLRNQWNVNIVGSQDGYFKPEQRQALFERIHASGAQIVTVAMGSPKQEIFMRDCRLVHPDALYMGVGGTYDVFTGHVKRAPKIWQTLGLEWLYRLLSQPSRIKRQLRLLRYLRWHYTGNL.

It belongs to the glycosyltransferase 26 family.

The enzyme catalyses UDP-N-acetyl-alpha-D-mannosaminouronate + N-acetyl-alpha-D-glucosaminyl-di-trans,octa-cis-undecaprenyl diphosphate = beta-D-ManNAcA-(1-&gt;4)-alpha-D-GlcNAc-di-trans,octa-cis-undecaprenyl diphosphate + UDP + H(+). It functions in the pathway bacterial outer membrane biogenesis; enterobacterial common antigen biosynthesis. Catalyzes the synthesis of Und-PP-GlcNAc-ManNAcA (Lipid II), the second lipid-linked intermediate involved in enterobacterial common antigen (ECA) synthesis. This Escherichia coli O127:H6 (strain E2348/69 / EPEC) protein is UDP-N-acetyl-D-mannosaminuronic acid transferase.